A 603-amino-acid polypeptide reads, in one-letter code: Translation initiation factor IF-2 (603 aa).

The tr-type G domain maps to 112-279; sequence TRPPIITIMG…NINLQAEILD (168 aa). The segment at 121–128 is G1; that stretch reads GHVDHGKT. 121–128 serves as a coordination point for GTP; that stretch reads GHVDHGKT. The G2 stretch occupies residues 146–150; the sequence is GITQH. Residues 167 to 170 are G3; it reads DTPG. GTP is bound by residues 167–171 and 221–224; these read DTPGH and NKMD. Positions 221 to 224 are G4; that stretch reads NKMD. The interval 257–259 is G5; it reads SAL.

Belongs to the TRAFAC class translation factor GTPase superfamily. Classic translation factor GTPase family. IF-2 subfamily.

It localises to the cytoplasm. One of the essential components for the initiation of protein synthesis. Protects formylmethionyl-tRNA from spontaneous hydrolysis and promotes its binding to the 30S ribosomal subunits. Also involved in the hydrolysis of GTP during the formation of the 70S ribosomal complex. The chain is Translation initiation factor IF-2 from Mycoplasmopsis pulmonis (strain UAB CTIP) (Mycoplasma pulmonis).